The chain runs to 160 residues: Transcription antitermination protein NusB (160 aa).

This sequence belongs to the NusB family.

Involved in transcription antitermination. Required for transcription of ribosomal RNA (rRNA) genes. Binds specifically to the boxA antiterminator sequence of the ribosomal RNA (rrn) operons. The sequence is that of Transcription antitermination protein NusB from Rhizobium johnstonii (strain DSM 114642 / LMG 32736 / 3841) (Rhizobium leguminosarum bv. viciae).